We begin with the raw amino-acid sequence, 431 residues long: Histidinol dehydrogenase (431 aa).

NAD(+) is bound by residues Tyr-127, Gln-189, and Asn-212. Residues Ser-237, Gln-259, and His-262 each coordinate substrate. Residues Gln-259 and His-262 each coordinate Zn(2+). Active-site proton acceptor residues include Glu-326 and His-327. Substrate-binding residues include His-327, Asp-360, Glu-414, and His-419. Residue Asp-360 coordinates Zn(2+). Zn(2+) is bound at residue His-419.

This sequence belongs to the histidinol dehydrogenase family. Zn(2+) is required as a cofactor.

The enzyme catalyses L-histidinol + 2 NAD(+) + H2O = L-histidine + 2 NADH + 3 H(+). The protein operates within amino-acid biosynthesis; L-histidine biosynthesis; L-histidine from 5-phospho-alpha-D-ribose 1-diphosphate: step 9/9. Catalyzes the sequential NAD-dependent oxidations of L-histidinol to L-histidinaldehyde and then to L-histidine. The protein is Histidinol dehydrogenase of Xanthomonas campestris pv. campestris (strain 8004).